A 385-amino-acid chain; its full sequence is Probable threonine protease PRSS50 (385 aa).

A signal peptide spans 1-39 (MGRWCQTVARGQRPRTSAPSRAGALLLLLLLLRSAGCWG). Residues 93–358 (VSEGKVDPYR…YQHWIWDCLN (266 aa)) form the Peptidase S1 domain. Residue asparagine 133 is glycosylated (N-linked (GlcNAc...) asparagine). Residues cysteine 138 and cysteine 154 are joined by a disulfide bond. Active-site charge relay system residues include histidine 153 and aspartate 206. 3 disulfide bridges follow: cysteine 240–cysteine 316, cysteine 273–cysteine 296, and cysteine 306–cysteine 334. N-linked (GlcNAc...) asparagine glycosylation is present at asparagine 279. Threonine 310 acts as the Charge relay system in catalysis.

The protein belongs to the peptidase S1 family. Testis specific. Differentially expressed in some breast cancer tissues.

It is found in the endoplasmic reticulum. In terms of biological role, may be involved in proteolysis through its threonine endopeptidase activity. The polypeptide is Probable threonine protease PRSS50 (PRSS50) (Homo sapiens (Human)).